The chain runs to 469 residues: UDP-N-acetylmuramate--L-alanine ligase (469 aa).

119–125 (GTHGKTT) lines the ATP pocket.

The protein belongs to the MurCDEF family.

The protein resides in the cytoplasm. It catalyses the reaction UDP-N-acetyl-alpha-D-muramate + L-alanine + ATP = UDP-N-acetyl-alpha-D-muramoyl-L-alanine + ADP + phosphate + H(+). It participates in cell wall biogenesis; peptidoglycan biosynthesis. Its function is as follows. Cell wall formation. This is UDP-N-acetylmuramate--L-alanine ligase from Ruthia magnifica subsp. Calyptogena magnifica.